The sequence spans 572 residues: Proline--tRNA ligase (572 aa).

The protein belongs to the class-II aminoacyl-tRNA synthetase family. ProS type 1 subfamily. Homodimer.

The protein resides in the cytoplasm. It carries out the reaction tRNA(Pro) + L-proline + ATP = L-prolyl-tRNA(Pro) + AMP + diphosphate. Functionally, catalyzes the attachment of proline to tRNA(Pro) in a two-step reaction: proline is first activated by ATP to form Pro-AMP and then transferred to the acceptor end of tRNA(Pro). As ProRS can inadvertently accommodate and process non-cognate amino acids such as alanine and cysteine, to avoid such errors it has two additional distinct editing activities against alanine. One activity is designated as 'pretransfer' editing and involves the tRNA(Pro)-independent hydrolysis of activated Ala-AMP. The other activity is designated 'posttransfer' editing and involves deacylation of mischarged Ala-tRNA(Pro). The misacylated Cys-tRNA(Pro) is not edited by ProRS. This chain is Proline--tRNA ligase, found in Cronobacter sakazakii (strain ATCC BAA-894) (Enterobacter sakazakii).